The chain runs to 532 residues: Phosphoenolpyruvate carboxykinase (ATP) (532 aa).

Residues Arg-60, Tyr-194, and Lys-200 each coordinate substrate. ATP is bound by residues Lys-200, His-219, and 237–245; that span reads GLSGTGKTT. 2 residues coordinate Mn(2+): Lys-200 and His-219. Asp-258 lines the Mn(2+) pocket. Residues Glu-286, Arg-324, and Thr-449 each contribute to the ATP site. Residue Arg-324 participates in substrate binding.

The protein belongs to the phosphoenolpyruvate carboxykinase (ATP) family. Mn(2+) is required as a cofactor.

The protein localises to the cytoplasm. The enzyme catalyses oxaloacetate + ATP = phosphoenolpyruvate + ADP + CO2. It participates in carbohydrate biosynthesis; gluconeogenesis. Its function is as follows. Involved in the gluconeogenesis. Catalyzes the conversion of oxaloacetate (OAA) to phosphoenolpyruvate (PEP) through direct phosphoryl transfer between the nucleoside triphosphate and OAA. This chain is Phosphoenolpyruvate carboxykinase (ATP), found in Ruegeria pomeroyi (strain ATCC 700808 / DSM 15171 / DSS-3) (Silicibacter pomeroyi).